A 333-amino-acid polypeptide reads, in one-letter code: Transcription factor MYB36 (333 aa).

2 HTH myb-type domains span residues 9–62 (KANV…LNYL) and 63–117 (RPNI…KKKL). DNA-binding regions (H-T-H motif) lie at residues 38-62 (WIALPQKIGLKRCGKSCRLRWLNYL) and 90-113 (WSIIAAQLPGRTDNDIKNYWNTKL). Residues 119–150 (GRQKQMNRQDSITDSTENNLSNNNNNKSPQNL) form a disordered region. Positions 122-135 (KQMNRQDSITDSTE) are enriched in polar residues. A compositionally biased stretch (low complexity) spans 136 to 150 (NNLSNNNNNKSPQNL).

In terms of tissue distribution, expressed in leaves, roots (endodermis-specific) and seedlings.

It is found in the nucleus. Transcription factors that activates genes required for endodermal differentiation but represses genes involved in proliferative divisions, thus regulating the transition from proliferation to differentiation in root endodermis. Required for Casparian strip formation by positively regulating the expression of the Casparian strip genes CASP1, PER64 and ESB1 and other endodermis-specific genes, thus triggering correct localized lignin biosynthesis in root endodermis and subsequently regulating global ion homeostasis. This chain is Transcription factor MYB36, found in Arabidopsis thaliana (Mouse-ear cress).